Reading from the N-terminus, the 395-residue chain is Methylthioribose-1-phosphate isomerase (395 aa).

Residue aspartate 258 is the Proton donor of the active site.

This sequence belongs to the eIF-2B alpha/beta/delta subunits family. MtnA subfamily.

It is found in the cytoplasm. Its subcellular location is the nucleus. The catalysed reaction is 5-(methylsulfanyl)-alpha-D-ribose 1-phosphate = 5-(methylsulfanyl)-D-ribulose 1-phosphate. It participates in amino-acid biosynthesis; L-methionine biosynthesis via salvage pathway; L-methionine from S-methyl-5-thio-alpha-D-ribose 1-phosphate: step 1/6. Catalyzes the interconversion of methylthioribose-1-phosphate (MTR-1-P) into methylthioribulose-1-phosphate (MTRu-1-P). The sequence is that of Methylthioribose-1-phosphate isomerase from Podospora anserina (strain S / ATCC MYA-4624 / DSM 980 / FGSC 10383) (Pleurage anserina).